Here is a 95-residue protein sequence, read N- to C-terminus: UPF0235 protein Ssed_1229 (95 aa).

Belongs to the UPF0235 family.

This is UPF0235 protein Ssed_1229 from Shewanella sediminis (strain HAW-EB3).